The following is a 90-amino-acid chain: YcgL domain-containing protein YpsIP31758_2009 (90 aa).

One can recognise a YcgL domain in the interval 1–85; sequence MLCAIYRSPK…PPESLLKMHL (85 aa).

The sequence is that of YcgL domain-containing protein YpsIP31758_2009 from Yersinia pseudotuberculosis serotype O:1b (strain IP 31758).